The chain runs to 248 residues: Granulin (248 aa).

Belongs to the polyhedrin family.

Its function is as follows. Component of the virus occlusion bodies, which are large proteinaceous structures, that protect the virus from the outside environment for extended periods until they are ingested by insect larvae. The protein is Granulin of Cydia pomonella (Codling moth).